We begin with the raw amino-acid sequence, 353 residues long: Photosystem II protein D1 (353 aa).

T2 bears the N-acetylthreonine mark. T2 carries the phosphothreonine modification. The next 3 membrane-spanning stretches (helical) occupy residues 29-46 (YIGW…TATS), 118-133 (HFLL…EWEL), and 142-156 (WIAV…AATA). Residue H118 coordinates chlorophyll a. Y126 contacts pheophytin a. Positions 170 and 189 each coordinate [CaMn4O5] cluster. The chain crosses the membrane as a helical span at residues 197–218 (FHMLGVAGVFGGSLFSAMHGSL). H198 is a chlorophyll a binding site. A quinone is bound by residues H215 and 264–265 (SF). Residue H215 coordinates Fe cation. H272 contributes to the Fe cation binding site. A helical transmembrane segment spans residues 274 to 288 (FLAAWPVVGIWFTSL). [CaMn4O5] cluster contacts are provided by H332, E333, D342, and A344. Residues 345–353 (AIDAPSVNG) constitute a propeptide that is removed on maturation.

This sequence belongs to the reaction center PufL/M/PsbA/D family. As to quaternary structure, PSII is composed of 1 copy each of membrane proteins PsbA, PsbB, PsbC, PsbD, PsbE, PsbF, PsbH, PsbI, PsbJ, PsbK, PsbL, PsbM, PsbT, PsbX, PsbY, PsbZ, Psb30/Ycf12, at least 3 peripheral proteins of the oxygen-evolving complex and a large number of cofactors. It forms dimeric complexes. It depends on The D1/D2 heterodimer binds P680, chlorophylls that are the primary electron donor of PSII, and subsequent electron acceptors. It shares a non-heme iron and each subunit binds pheophytin, quinone, additional chlorophylls, carotenoids and lipids. D1 provides most of the ligands for the Mn4-Ca-O5 cluster of the oxygen-evolving complex (OEC). There is also a Cl(-1) ion associated with D1 and D2, which is required for oxygen evolution. The PSII complex binds additional chlorophylls, carotenoids and specific lipids. as a cofactor. Tyr-161 forms a radical intermediate that is referred to as redox-active TyrZ, YZ or Y-Z. In terms of processing, C-terminally processed by CTPA; processing is essential to allow assembly of the oxygen-evolving complex and thus photosynthetic growth.

The protein localises to the plastid. It localises to the chloroplast thylakoid membrane. It carries out the reaction 2 a plastoquinone + 4 hnu + 2 H2O = 2 a plastoquinol + O2. Photosystem II (PSII) is a light-driven water:plastoquinone oxidoreductase that uses light energy to abstract electrons from H(2)O, generating O(2) and a proton gradient subsequently used for ATP formation. It consists of a core antenna complex that captures photons, and an electron transfer chain that converts photonic excitation into a charge separation. The D1/D2 (PsbA/PsbD) reaction center heterodimer binds P680, the primary electron donor of PSII as well as several subsequent electron acceptors. In Coffea arabica (Arabian coffee), this protein is Photosystem II protein D1.